We begin with the raw amino-acid sequence, 313 residues long: Ribosomal RNA small subunit methyltransferase H (313 aa).

S-adenosyl-L-methionine-binding positions include 35–37, aspartate 55, phenylalanine 79, aspartate 101, and glutamine 108; that span reads GGH.

This sequence belongs to the methyltransferase superfamily. RsmH family.

The protein localises to the cytoplasm. The enzyme catalyses cytidine(1402) in 16S rRNA + S-adenosyl-L-methionine = N(4)-methylcytidine(1402) in 16S rRNA + S-adenosyl-L-homocysteine + H(+). In terms of biological role, specifically methylates the N4 position of cytidine in position 1402 (C1402) of 16S rRNA. This is Ribosomal RNA small subunit methyltransferase H from Erwinia tasmaniensis (strain DSM 17950 / CFBP 7177 / CIP 109463 / NCPPB 4357 / Et1/99).